The following is a 103-amino-acid chain: Large ribosomal subunit protein uL24 (103 aa).

The protein belongs to the universal ribosomal protein uL24 family. In terms of assembly, part of the 50S ribosomal subunit.

In terms of biological role, one of two assembly initiator proteins, it binds directly to the 5'-end of the 23S rRNA, where it nucleates assembly of the 50S subunit. Its function is as follows. One of the proteins that surrounds the polypeptide exit tunnel on the outside of the subunit. This Haemophilus influenzae (strain 86-028NP) protein is Large ribosomal subunit protein uL24.